Reading from the N-terminus, the 795-residue chain is Volume-regulated anion channel subunit LRRC8E (795 aa).

Residues 1-22 (MIPVAEFKQFTEQQPAFKVLKP) lie on the Cytoplasmic side of the membrane. A helical membrane pass occupies residues 23–43 (WWDVLAEYLTVAMLMIGVFGC). Residues 44-116 (TLQVTQDKII…YETALHWYAK (73 aa)) are Extracellular-facing. An intrachain disulfide couples cysteine 54 to cysteine 300. Asparagine 63 is a glycosylation site (N-linked (GlcNAc...) asparagine). The chain crosses the membrane as a helical span at residues 117 to 137 (YFPYLVVIHTLIFMVCTSFWF). The Cytoplasmic portion of the chain corresponds to 138–264 (KFPGTSSKIE…IRQTVLKVCK (127 aa)). Residues 265 to 285 (FFAILVYNLIYVEKISFLVAC) form a helical membrane-spanning segment. Topologically, residues 286–312 (RVETSEITGYASFCCNHTKAHLFSKLA) are extracellular. Asparagine 301 carries N-linked (GlcNAc...) asparagine glycosylation. A helical transmembrane segment spans residues 313-333 (FCYISFVCVYGITCLYTLYWL). At 334–795 (FHRPLKEYSF…AEVREKMEEE (462 aa)) the chain is on the cytoplasmic side. LRR repeat units lie at residues 535 to 556 (QLKVLSLRSNAGKVPASVTDVA), 558 to 578 (HLQRLSLHNDGARLLALNSLK), 582 to 603 (VLRELELVACGLERIPHAIFSL), 605 to 626 (ALQELDLKDNHLRSIEEILSFQ), 630 to 651 (KLVTLRLWHNQIAYVPEHVRKL), 653 to 674 (SLEQLYLSHNKLETLPTQLGQC), 676 to 697 (GLRLLDLSHNGLRSLPPELGLL), 699 to 720 (SLQHLALSYNALESLPDELFFC), 722 to 744 (KLRTLLLGYNHLTQLSPDVAALQ), and 745 to 766 (ALSRLELKGNRLETLPEELGDC).

The protein belongs to the LRRC8 family. Heterohexamer; oligomerizes with other LRRC8 proteins (LRRC8A, LRRC8C, LRRC8D and/or LRRC8B) to form a heterohexamer. In vivo, the subunit composition may depend primarily on expression levels, and heterooligomeric channels containing various proportions of the different LRRC8 proteins may coexist.

It localises to the cell membrane. Its subcellular location is the endoplasmic reticulum membrane. It is found in the lysosome membrane. The catalysed reaction is chloride(in) = chloride(out). It carries out the reaction iodide(out) = iodide(in). The enzyme catalyses taurine(out) = taurine(in). It catalyses the reaction 2',3'-cGAMP(out) = 2',3'-cGAMP(in). In terms of biological role, non-essential component of the volume-regulated anion channel (VRAC, also named VSOAC channel), an anion channel required to maintain a constant cell volume in response to extracellular or intracellular osmotic changes. The VRAC channel conducts iodide better than chloride and can also conduct organic osmolytes like taurine. Mediates efflux of amino acids, such as aspartate, in response to osmotic stress. The VRAC channel also mediates transport of immunoreactive cyclic dinucleotide GMP-AMP (2'-3'-cGAMP), an immune messenger produced in response to DNA virus in the cytosol. Channel activity requires LRRC8A plus at least one other family member (LRRC8B, LRRC8C, LRRC8D or LRRC8E); channel characteristics depend on the precise subunit composition. Also plays a role in lysosome homeostasis by forming functional lysosomal VRAC channels in response to low cytoplasmic ionic strength condition: lysosomal VRAC channels are necessary for the formation of large lysosome-derived vacuoles, which store and then expel excess water to maintain cytosolic water homeostasis. The polypeptide is Volume-regulated anion channel subunit LRRC8E (Mus musculus (Mouse)).